Here is a 229-residue protein sequence, read N- to C-terminus: GTP cyclohydrolase 1 (229 aa).

The interval M1–Q21 is disordered. Zn(2+) contacts are provided by C118, H121, and C189.

Belongs to the GTP cyclohydrolase I family. Toroid-shaped homodecamer, composed of two pentamers of five dimers.

The catalysed reaction is GTP + H2O = 7,8-dihydroneopterin 3'-triphosphate + formate + H(+). It functions in the pathway cofactor biosynthesis; 7,8-dihydroneopterin triphosphate biosynthesis; 7,8-dihydroneopterin triphosphate from GTP: step 1/1. This is GTP cyclohydrolase 1 from Rhodopseudomonas palustris (strain HaA2).